The following is a 637-amino-acid chain: tRNA 5-methylaminomethyl-2-thiouridine biosynthesis bifunctional protein MnmC (637 aa).

Positions Met-1–Asn-232 are tRNA (mnm(5)s(2)U34)-methyltransferase. Residues Ile-255–Asp-637 form an FAD-dependent cmnm(5)s(2)U34 oxidoreductase region.

In the N-terminal section; belongs to the methyltransferase superfamily. tRNA (mnm(5)s(2)U34)-methyltransferase family. This sequence in the C-terminal section; belongs to the DAO family. Requires FAD as cofactor.

It localises to the cytoplasm. The enzyme catalyses 5-aminomethyl-2-thiouridine(34) in tRNA + S-adenosyl-L-methionine = 5-methylaminomethyl-2-thiouridine(34) in tRNA + S-adenosyl-L-homocysteine + H(+). In terms of biological role, catalyzes the last two steps in the biosynthesis of 5-methylaminomethyl-2-thiouridine (mnm(5)s(2)U) at the wobble position (U34) in tRNA. Catalyzes the FAD-dependent demodification of cmnm(5)s(2)U34 to nm(5)s(2)U34, followed by the transfer of a methyl group from S-adenosyl-L-methionine to nm(5)s(2)U34, to form mnm(5)s(2)U34. The chain is tRNA 5-methylaminomethyl-2-thiouridine biosynthesis bifunctional protein MnmC from Polaromonas sp. (strain JS666 / ATCC BAA-500).